The primary structure comprises 112 residues: uncharacterized protein (112 aa).

C39, C105, and C107 together coordinate Fe cation.

This sequence belongs to the HesB/IscA family. Ycf83 subfamily.

It is found in the plastid. The protein resides in the chloroplast. This is an uncharacterized protein from Galdieria sulphuraria (Red alga).